Consider the following 236-residue polypeptide: UPF0502 protein Bcep1808_3727 (236 aa).

The protein belongs to the UPF0502 family.

This chain is UPF0502 protein Bcep1808_3727, found in Burkholderia vietnamiensis (strain G4 / LMG 22486) (Burkholderia cepacia (strain R1808)).